The following is a 149-amino-acid chain: MATRFRQTRRRRGHVSMGYGRIGKHRKQRGGRGNAGGQHHRKTWFTTFHPDYFGKHGMRVFHLKANKYYCPSINVDSLWSLVGKDVQAQYKNAKVGEEVPVIDCVKHGYFKVLGKGFLPKQPVIVRARYFSEKAQQKIKAVGGACELTA.

Residues 21 to 40 (RIGKHRKQRGGRGNAGGQHH) form a disordered region.

Belongs to the universal ribosomal protein uL15 family. In terms of assembly, component of the large ribosomal subunit.

The protein resides in the cytoplasm. It localises to the cytosol. Its subcellular location is the endoplasmic reticulum. In terms of biological role, component of the large ribosomal subunit. The ribosome is a large ribonucleoprotein complex responsible for the synthesis of proteins in the cell. The polypeptide is Large ribosomal subunit protein uL15A (rpl27a-1) (Entamoeba histolytica (strain ATCC 30459 / HM-1:IMSS / ABRM)).